Reading from the N-terminus, the 28-residue chain is Short cationic peptide-1a (28 aa).

E28 is subject to Glutamic acid 1-amide.

In terms of tissue distribution, expressed by the venom gland.

It localises to the secreted. In Cupiennius salei (American wandering spider), this protein is Short cationic peptide-1a.